Reading from the N-terminus, the 463-residue chain is Retinoic acid receptor RXR-gamma (463 aa).

Positions M1–I138 are modulating. The segment at S18 to P53 is disordered. A compositionally biased stretch (polar residues) spans H21–L33. 2 consecutive NR C4-type zinc fingers follow at residues C139–C159 and C175–C194. Positions C139–M204 form a DNA-binding region, nuclear receptor. The tract at residues K205–G230 is hinge. Positions E211 to S222 are enriched in basic and acidic residues. Positions E211–E232 are disordered. The NR LBD domain maps to H231–P459.

The protein belongs to the nuclear hormone receptor family. NR2 subfamily. In terms of assembly, homodimer. Heterodimer with a RAR molecule. Binds DNA preferentially as a RAR/RXR heterodimer. Interacts with RARA. In terms of processing, acetylated by EP300.

The protein localises to the nucleus. Its subcellular location is the cytoplasm. In terms of biological role, receptor for retinoic acid. Retinoic acid receptors bind as heterodimers to their target response elements in response to their ligands, all-trans or 9-cis retinoic acid, and regulate gene expression in various biological processes. The RAR/RXR heterodimers bind to the retinoic acid response elements (RARE) composed of tandem 5'-AGGTCA-3' sites known as DR1-DR5. The high affinity ligand for RXRs is 9-cis retinoic acid. The protein is Retinoic acid receptor RXR-gamma (RXRG) of Pongo abelii (Sumatran orangutan).